Consider the following 181-residue polypeptide: Photosystem I assembly protein Ycf4 (181 aa).

Transmembrane regions (helical) follow at residues 19-41 (YFWA…SSYF) and 61-83 (LVMS…TLFW).

Belongs to the Ycf4 family.

The protein resides in the plastid. Its subcellular location is the chloroplast thylakoid membrane. Its function is as follows. Seems to be required for the assembly of the photosystem I complex. The chain is Photosystem I assembly protein Ycf4 from Trieres chinensis (Marine centric diatom).